We begin with the raw amino-acid sequence, 301 residues long: Rhodopsin (301 aa).

The Extracellular segment spans residues 1 to 18 (LHMIHLHWYQYPPMNPMM). A helical membrane pass occupies residues 19–43 (YPLLLIFMLFTGILCLAGNFVTIWV). At 44–55 (FMNTKSLRTPAN) the chain is on the cytoplasmic side. Residues 56-78 (LLVVNLAMSDFLMMFTMFPPMMV) form a helical membrane-spanning segment. At 79–92 (TCYYHTWTLGPTFC) the chain is on the extracellular side. Cys92 and Cys169 are oxidised to a cystine. A helical transmembrane segment spans residues 93–115 (QVYAFLGNLCGCASIWTMVFITF). The 'Ionic lock' involved in activated form stabilization signature appears at 116 to 118 (DRY). Residues 116 to 134 (DRYNVIVKGVAGEPLSTKK) lie on the Cytoplasmic side of the membrane. Residues 135-155 (ASLWILTIWVLSTTWCIAPFF) form a helical membrane-spanning segment. Residues 156–182 (GWNHYVPEGNLTGCGTDYLSEDILSRS) are Extracellular-facing. A glycan (N-linked (GlcNAc...) asparagine) is linked at Asn165. Residues 183 to 204 (YLYVYSTWVYFLPLAITIYCYV) form a helical membrane-spanning segment. The Cytoplasmic segment spans residues 205–245 (FIIKAVAAHEKGMRDQAKKMGIKSLRNEEAQKTSAECRLAK). The helical transmembrane segment at 246–267 (IAMTTVALWFIAWTPCLLINWV) threads the bilayer. Topologically, residues 268 to 278 (GMFARSYLSPV) are extracellular. Residues 279–300 (YTIWGYVFAKANAVYNPIVYAI) traverse the membrane as a helical segment. Lys288 bears the N6-(retinylidene)lysine mark.

It belongs to the G-protein coupled receptor 1 family. Opsin subfamily. Homodimer. Interacts with GNAQ. Post-translationally, contains one covalently linked retinal chromophore.

It localises to the cell projection. Its subcellular location is the rhabdomere membrane. Its function is as follows. Photoreceptor required for image-forming vision at low light intensity. Can use both retinal and 3-dehydroretinal as visual pigment. Light-induced isomerization of 11-cis to all-trans retinal triggers a conformational change that activates signaling via G-proteins. Signaling via GNAQ probably mediates the activation of phospholipase C. This chain is Rhodopsin (RHO), found in Procambarus seminolae (Crayfish).